The sequence spans 185 residues: Large ribosomal subunit protein eL19 (185 aa).

Positions 152-185 are disordered; sequence SDKLTSQQEARRAKNTASRAKRNEKAQIVAKVDV.

This sequence belongs to the eukaryotic ribosomal protein eL19 family.

This chain is Large ribosomal subunit protein eL19 (RPL19), found in Tetrahymena thermophila (strain SB210).